Here is a 314-residue protein sequence, read N- to C-terminus: Probable RuBisCO transcriptional regulator (314 aa).

Residues 6-63 form the HTH lysR-type domain; it reads FTLDQLKIIKTIHREGSFKTAAKKLYISQPAVSRQVQNLERQLNTPIFYRDKRKARLT. A DNA-binding region (H-T-H motif) is located at residues 23–42; sequence FKTAAKKLYISQPAVSRQVQ.

It belongs to the LysR transcriptional regulatory family.

It is found in the plastid. The protein localises to the chloroplast. In terms of biological role, trans-acting transcriptional regulator of RuBisCO genes (rbcL and rbcS) expression. The chain is Probable RuBisCO transcriptional regulator (rbcR) from Emiliania huxleyi (Coccolithophore).